The following is a 195-amino-acid chain: MKQFIDFIPLILFFIVYKIDPQNVEFAGFNLSGIYGATATLILASVIVYGALWLKHRHLEKSQWFTLGACLVLGGLTLAFHEDTFLKWKAPLVNWLFALAFAGSHFIGDKPMIQRIMGHAIQLPQGLWVRLNIAWVVFFLVCGFANLYVVFTYPNFWVDFKVFGSLGMTLLFLIGQGLFLARHLHDADTGEKPKD.

5 helical membrane passes run 34-54 (IYGA…ALWL), 65-85 (FTLG…EDTF), 88-108 (WKAP…HFIG), 131-151 (LNIA…YVVF), and 160-180 (FKVF…GLFL).

Belongs to the YciB family.

The protein localises to the cell inner membrane. In terms of biological role, plays a role in cell envelope biogenesis, maintenance of cell envelope integrity and membrane homeostasis. The polypeptide is Inner membrane-spanning protein YciB (Pseudomonas aeruginosa (strain LESB58)).